The following is a 325-amino-acid chain: MGQKVNPHGFRLGITSEFTSRWYADKQYKAYVGEDVKIRKMMSKGMERAGISRVDIERTQGRLRVDIHTARPGIVIGRRGAEADRIRGDLEKLTGKQVQLNILEVKNPEIDAQLVAQGVAEQLSSRVSFRRAMRKAMQSAMKSGAKGIRVQCSGRLGGAEMSRSEFYREGRVPLHTLRADIDYGFYEARTNFGRIGVKVWIYKGDIVQSRAEREAQEALLRQQRRERPRRGPRSGSSGTTQGGTDAGRAAARAGDRRGRGGSGGGGGSAEKASAAEKAPAEKPATESAAVEGTPVETPAVTPETTAAPAAVTTAEAQGAPEKAEG.

A KH type-2 domain is found at 38–106; that stretch reads IRKMMSKGME…QVQLNILEVK (69 aa). The segment at 217–325 is disordered; the sequence is EALLRQQRRE…AQGAPEKAEG (109 aa). Positions 222 to 232 are enriched in basic residues; that stretch reads QQRRERPRRGP. Positions 285 to 316 are enriched in low complexity; the sequence is TESAAVEGTPVETPAVTPETTAAPAAVTTAEA.

It belongs to the universal ribosomal protein uS3 family. Part of the 30S ribosomal subunit. Forms a tight complex with proteins S10 and S14.

In terms of biological role, binds the lower part of the 30S subunit head. Binds mRNA in the 70S ribosome, positioning it for translation. The sequence is that of Small ribosomal subunit protein uS3 from Parafrankia sp. (strain EAN1pec).